The following is a 115-amino-acid chain: Large ribosomal subunit protein bL19 (115 aa).

It belongs to the bacterial ribosomal protein bL19 family.

Functionally, this protein is located at the 30S-50S ribosomal subunit interface and may play a role in the structure and function of the aminoacyl-tRNA binding site. This chain is Large ribosomal subunit protein bL19, found in Streptococcus gordonii (strain Challis / ATCC 35105 / BCRC 15272 / CH1 / DL1 / V288).